A 300-amino-acid chain; its full sequence is PAK4-inhibitor INKA2 (300 aa).

Disordered stretches follow at residues 59–104 (GGTP…SSPK), 178–201 (LEKG…GQSR), and 230–288 (KEKP…LEPS). Over residues 60–73 (GTPTFSCPESSQEQ) the composition is skewed to polar residues. Residues 93–102 (SSSQPSFDSS) are compositionally biased toward low complexity. Positions 140 to 183 (EPDDWTSTLMSRGRNRQPLVLGDNVFADLVGNWLDLPELEKGGE) are inka box. Residues 246–256 (GRSKKVKKRSL) are compositionally biased toward basic residues.

This sequence belongs to the INKA family. As to quaternary structure, interacts with PAK4. Enriched in the nervous system.

It is found in the nucleus. In terms of biological role, inhibitor of the serine/threonine-protein kinase PAK4. Acts by binding PAK4 in a substrate-like manner, inhibiting the protein kinase activity. This chain is PAK4-inhibitor INKA2, found in Mus musculus (Mouse).